The primary structure comprises 604 residues: uncharacterized protein (604 aa).

The protein belongs to the glycosyltransferase 2 family.

This is an uncharacterized protein from Rickettsia conorii (strain ATCC VR-613 / Malish 7).